Here is a 576-residue protein sequence, read N- to C-terminus: Alpha-1,3-arabinosyltransferase XAT3 (576 aa).

Residues 1 to 19 (MKAGERPKLVRGVRQESRR) are Cytoplasmic-facing. The chain crosses the membrane as a helical; Signal-anchor for type II membrane protein span at residues 20-40 (FRLLVIVVGFFLVSLTFVFVS). Residues 41–576 (KPDAILFSLN…LLEALDNLNP (536 aa)) are Lumenal-facing. The tract at residues 64–171 (IQQKVNEPSG…KHKVTLPTVS (108 aa)) is disordered. 3 stretches are compositionally biased toward basic and acidic residues: residues 73–98 (GESRKTSTDALRGDPKVVDDEADAKP), 126–138 (THNKDGNGHKSHQ), and 147–163 (GESKGNDEEGEHAEQKH). N-linked (GlcNAc...) asparagine glycosylation is found at Asn172, Asn375, and Asn443.

It belongs to the glycosyltransferase 61 family.

The protein localises to the golgi apparatus membrane. It participates in glycan metabolism. Functionally, glycosyltransferase involved in the arabinosylation of xylan, the major hemicellulose (non-cellulosic component) of primary and secondary walls of angiosperms. Possesses alpha-1,3-arabinosyltransferase activity, transferring an arabinofuranose residue to the xylan backbone. This is Alpha-1,3-arabinosyltransferase XAT3 from Oryza sativa subsp. japonica (Rice).